The following is a 473-amino-acid chain: Glutamate--tRNA ligase (473 aa).

Positions 13–23 (PSPTGFLHVGG) match the 'HIGH' region motif. The 'KMSKS' region motif lies at 240–244 (KLSKR). Lys243 serves as a coordination point for ATP.

This sequence belongs to the class-I aminoacyl-tRNA synthetase family. Glutamate--tRNA ligase type 1 subfamily. Monomer.

The protein localises to the cytoplasm. The enzyme catalyses tRNA(Glu) + L-glutamate + ATP = L-glutamyl-tRNA(Glu) + AMP + diphosphate. Functionally, catalyzes the attachment of glutamate to tRNA(Glu) in a two-step reaction: glutamate is first activated by ATP to form Glu-AMP and then transferred to the acceptor end of tRNA(Glu). This is Glutamate--tRNA ligase from Shewanella denitrificans (strain OS217 / ATCC BAA-1090 / DSM 15013).